An 892-amino-acid chain; its full sequence is Alpha-actinin-1 (892 aa).

At Met1 the chain carries N-acetylmethionine. The actin-binding stretch occupies residues 1–247; that stretch reads MDHYDSQQTN…IMTYVSSFYH (247 aa). Position 6 is a phosphoserine (Ser6). Position 12 is a phosphotyrosine; by FAK1 (Tyr12). 2 consecutive Calponin-homology (CH) domains span residues 31-135 and 144-250; these read KQQR…LRFA and TSAK…HAFS. Residues Lys95 and Lys195 each carry the N6-acetyllysine modification. Spectrin repeat units lie at residues 274-384, 394-499, 509-620, and 630-733; these read QLME…WLLN, HLAE…ALER, QLYL…ALTE, and RLRK…EVEN. The interaction with DDN stretch occupies residues 274 to 733; it reads QLMEDYEKLA…IARTINEVEN (460 aa). At Ser471 the chain carries Phosphoserine. Residue Lys676 is modified to N6-acetyllysine. The residue at position 677 (Ser677) is a Phosphoserine. 2 consecutive EF-hand domains span residues 746-781 and 787-822; these read EQMNEFRASFNHFDRDHSGTLGPEEFKACLISLGYD and QGEAEFARIMSIVDPNRLGVVTFQAFIDFMSRETAD. 5 residues coordinate Ca(2+): Asp759, Asp761, Ser763, Thr765, and Glu770. At Ser890 the chain carries Phosphoserine.

The protein belongs to the alpha-actinin family. Homodimer; antiparallel. Interacts with MYOZ2, TTID and LPP. Interacts with DDN. Interacts with PSD. Interacts with MICALL2. Interacts with DNM2 and CTTN. Interacts with PDLIM1. Interacts with PDLIM2. Interacts with PDLIM4 (via PDZ domain). Interacts with IGSF8.

It is found in the cytoplasm. Its subcellular location is the cytoskeleton. It localises to the myofibril. The protein localises to the sarcomere. The protein resides in the z line. It is found in the cell membrane. Its subcellular location is the cell junction. It localises to the cell projection. The protein localises to the ruffle. F-actin cross-linking protein which is thought to anchor actin to a variety of intracellular structures. Association with IGSF8 regulates the immune synapse formation and is required for efficient T-cell activation. This chain is Alpha-actinin-1 (ACTN1), found in Macaca fascicularis (Crab-eating macaque).